We begin with the raw amino-acid sequence, 88 residues long: Kunitz-type kappaPI-theraphotoxin-Hs1d (88 aa).

Residues 1–27 (MGIARILSAVLFLSVLFVVTFPTLLSA) form the signal peptide. The propeptide occupies 28 to 33 (DHHDGR). Residues 37–85 (CRLPSDRGRCKASFERWYFNGTTCTKFVYGGYGGNDNRFPTEKACMKRC) form the BPTI/Kunitz inhibitor domain. Cystine bridges form between C37–C85 and C60–C81.

It belongs to the venom Kunitz-type family. 01 (intermediate) subfamily. As to expression, expressed by the venom gland.

Its subcellular location is the secreted. Serine protease inhibitor that inhibits trypsin at a molar ratio of 1:1. This chain is Kunitz-type kappaPI-theraphotoxin-Hs1d, found in Cyriopagopus schmidti (Chinese bird spider).